A 156-amino-acid polypeptide reads, in one-letter code: MARSRGSSRPISRSRPTQTRSASTMAAPVHPQQQQQPNAYSHPPAAGAQTRQPGMFAQMASTAAGVAVGSTIGHTLGAGITGMFSGSGSDSAPVEQQQQNMANTSGQTQTDQQLGRTCEIDARNFTRCLDENNGNFQICDYYLQQLKACQEAARQY.

A mitochondrion-targeting transit peptide spans 1 to 21; sequence MARSRGSSRPISRSRPTQTRS. The segment covering 1 to 21 has biased composition (low complexity); it reads MARSRGSSRPISRSRPTQTRS. Disordered stretches follow at residues 1 to 50 and 78 to 110; these read MARS…GAQT and AGITGMFSGSGSDSAPVEQQQQNMANTSGQTQT. Polar residues predominate over residues 84–110; it reads FSGSGSDSAPVEQQQQNMANTSGQTQT. The CHCH domain maps to 115–156; that stretch reads GRTCEIDARNFTRCLDENNGNFQICDYYLQQLKACQEAARQY. The short motif at 118–128 is the Cx9C motif element; that stretch reads CEIDARNFTRC. Intrachain disulfides connect C118/C149 and C128/C139.

The protein resides in the mitochondrion intermembrane space. In Saccharomyces cerevisiae (strain ATCC 204508 / S288c) (Baker's yeast), this protein is Mitochondrial intermembrane space cysteine motif-containing protein MIX17 (MIX17).